Consider the following 312-residue polypeptide: Protein dif-1 (312 aa).

Solcar repeat units follow at residues 2-93 (SDVL…GKWL), 102-193 (MTFI…LKKK), and 203-289 (LSPG…TLAA). 6 consecutive transmembrane segments (helical) span residues 5–25 (LLNF…GHPF), 69–89 (MAAP…GCAV), 104–124 (FIQN…VMVP), 172–192 (TLLR…YLKK), 209–229 (LMAG…ADVL), and 261–282 (LFKG…CFFG).

This sequence belongs to the mitochondrial carrier (TC 2.A.29) family.

The protein localises to the mitochondrion inner membrane. Functionally, seems to play a role in the maintenance of tissue differentiation in the developing embryo, but not for its initiation. In Caenorhabditis elegans, this protein is Protein dif-1 (dif-1).